Here is a 389-residue protein sequence, read N- to C-terminus: Ribosomal RNA large subunit methyltransferase M (389 aa).

Polar residues predominate over residues 1 to 13 (MIGNARMSQKYPT). Residues 1–24 (MIGNARMSQKYPTSSSRKRSPLSS) are disordered. Residues S214, 247 to 250 (APGG), D266, D286, and D302 contribute to the S-adenosyl-L-methionine site. Catalysis depends on K331, which acts as the Proton acceptor.

The protein belongs to the class I-like SAM-binding methyltransferase superfamily. RNA methyltransferase RlmE family. RlmM subfamily. Monomer.

It is found in the cytoplasm. The enzyme catalyses cytidine(2498) in 23S rRNA + S-adenosyl-L-methionine = 2'-O-methylcytidine(2498) in 23S rRNA + S-adenosyl-L-homocysteine + H(+). Functionally, catalyzes the 2'-O-methylation at nucleotide C2498 in 23S rRNA. The sequence is that of Ribosomal RNA large subunit methyltransferase M from Hahella chejuensis (strain KCTC 2396).